A 126-amino-acid polypeptide reads, in one-letter code: MSSIETLVEEIGKLTLTEASELVKALEEKFGVSAAPAVVAGGMAAAPAGEAAAAEEKTEFDVVLKAAGAQKINVIKVVRAITGLGLKEAKEMVDGAPKTVKEAVSKDEAEKIAKELKDAGAEVELN.

The protein belongs to the bacterial ribosomal protein bL12 family. In terms of assembly, homodimer. Part of the ribosomal stalk of the 50S ribosomal subunit. Forms a multimeric L10(L12)X complex, where L10 forms an elongated spine to which 2 to 4 L12 dimers bind in a sequential fashion. Binds GTP-bound translation factors.

In terms of biological role, forms part of the ribosomal stalk which helps the ribosome interact with GTP-bound translation factors. Is thus essential for accurate translation. This Chlorobaculum parvum (strain DSM 263 / NCIMB 8327) (Chlorobium vibrioforme subsp. thiosulfatophilum) protein is Large ribosomal subunit protein bL12.